Reading from the N-terminus, the 554-residue chain is Arginine--tRNA ligase (554 aa).

The short motif at 129–139 (ANPTGPLHIGH) is the 'HIGH' region element.

It belongs to the class-I aminoacyl-tRNA synthetase family. Monomer.

The protein localises to the cytoplasm. It catalyses the reaction tRNA(Arg) + L-arginine + ATP = L-arginyl-tRNA(Arg) + AMP + diphosphate. In Geobacter sp. (strain M21), this protein is Arginine--tRNA ligase.